We begin with the raw amino-acid sequence, 305 residues long: Glycine--tRNA ligase alpha subunit (305 aa).

The protein belongs to the class-II aminoacyl-tRNA synthetase family. Tetramer of two alpha and two beta subunits.

The protein resides in the cytoplasm. It carries out the reaction tRNA(Gly) + glycine + ATP = glycyl-tRNA(Gly) + AMP + diphosphate. This is Glycine--tRNA ligase alpha subunit from Streptococcus pyogenes serotype M2 (strain MGAS10270).